The sequence spans 252 residues: Phosphate import ATP-binding protein PstB 2 (252 aa).

Residues 6–247 enclose the ABC transporter domain; the sequence is ISINDLSVYF…PQHKETEDYI (242 aa). An ATP-binding site is contributed by 38–45; that stretch reads GPSGSGKS.

It belongs to the ABC transporter superfamily. Phosphate importer (TC 3.A.1.7) family. In terms of assembly, the complex is composed of two ATP-binding proteins (PstB), two transmembrane proteins (PstC and PstA) and a solute-binding protein (PstS).

It is found in the cell membrane. The enzyme catalyses phosphate(out) + ATP + H2O = ADP + 2 phosphate(in) + H(+). Functionally, part of the ABC transporter complex PstSACB involved in phosphate import. Responsible for energy coupling to the transport system. The polypeptide is Phosphate import ATP-binding protein PstB 2 (Streptococcus thermophilus (strain CNRZ 1066)).